A 243-amino-acid chain; its full sequence is Small ribosomal subunit protein uS3 (243 aa).

The KH type-2 domain maps to 39–110; it reads IRTFIEKKYG…QVRINVVEVE (72 aa). Residues 216 to 243 form a disordered region; that stretch reads QTIPVGANPKRKASRRPQQFEDRSNENS. The segment covering 233 to 243 has biased composition (basic and acidic residues); it reads QQFEDRSNENS.

Belongs to the universal ribosomal protein uS3 family. Part of the 30S ribosomal subunit. Forms a tight complex with proteins S10 and S14.

Binds the lower part of the 30S subunit head. Binds mRNA in the 70S ribosome, positioning it for translation. This Prochlorococcus marinus (strain MIT 9215) protein is Small ribosomal subunit protein uS3.